Here is a 242-residue protein sequence, read N- to C-terminus: Uridylate kinase (242 aa).

16-19 (KISG) is a binding site for ATP. Residues 24–29 (GDQGFG) are involved in allosteric activation by GTP. Gly-58 contacts UMP. Residues Gly-59 and Arg-63 each contribute to the ATP site. UMP contacts are provided by residues Asp-78 and 139–146 (TGNPYFTT). Positions 166, 172, and 175 each coordinate ATP.

It belongs to the UMP kinase family. As to quaternary structure, homohexamer.

It is found in the cytoplasm. It catalyses the reaction UMP + ATP = UDP + ADP. It participates in pyrimidine metabolism; CTP biosynthesis via de novo pathway; UDP from UMP (UMPK route): step 1/1. Allosterically activated by GTP. Inhibited by UTP. Functionally, catalyzes the reversible phosphorylation of UMP to UDP. This Roseobacter denitrificans (strain ATCC 33942 / OCh 114) (Erythrobacter sp. (strain OCh 114)) protein is Uridylate kinase.